Consider the following 853-residue polypeptide: A-kinase anchor protein 3 (853 aa).

Residues 124–137 (VSFYANRLTNLVIA) are PKA-RII subunit binding domain. The segment at 188 to 240 (RNAAPDKAPGSGDRVSGSSQSPPNLKYKSTLKIKESTKERQGPDDKPPSKKSF) is disordered. Phosphoserine occurs at positions 205 and 208. A compositionally biased stretch (basic and acidic residues) spans 219-235 (KIKESTKERQGPDDKPP). Serine 403 is subject to Phosphoserine. Phosphotyrosine is present on tyrosine 404. Serine 635 and serine 636 each carry phosphoserine.

It belongs to the AKAP110 family. Interacts with ROPN1 and ROPN1L. Interacts with QRICH2. Post-translationally, phosphorylated by STK33 during sperm flagella assembly. Phosphorylated on tyrosine residues. As to expression, testis specific; only expressed in spermatids.

The protein localises to the cytoplasmic vesicle. It localises to the secretory vesicle. The protein resides in the acrosome. Its subcellular location is the cell projection. It is found in the cilium. The protein localises to the flagellum. Structural component of sperm fibrous sheath. Required for the formation of the subcellular structure of the sperm flagellum, sperm motility and male fertility. This is A-kinase anchor protein 3 from Homo sapiens (Human).